The sequence spans 440 residues: Chromosome partition protein MukF (440 aa).

Residues 208-236 are leucine-zipper; it reads LSETSGTLRELQDTLEAAGDKLQANLLRI.

It belongs to the MukF family. In terms of assembly, interacts, and probably forms a ternary complex, with MukE and MukB via its C-terminal region. The complex formation is stimulated by calcium or magnesium. It is required for an interaction between MukE and MukB.

The protein localises to the cytoplasm. Its subcellular location is the nucleoid. Functionally, involved in chromosome condensation, segregation and cell cycle progression. May participate in facilitating chromosome segregation by condensation DNA from both sides of a centrally located replisome during cell division. Not required for mini-F plasmid partitioning. Probably acts via its interaction with MukB and MukE. Overexpression results in anucleate cells. It has a calcium binding activity. The chain is Chromosome partition protein MukF from Shigella boydii serotype 4 (strain Sb227).